The chain runs to 210 residues: Large ribosomal subunit protein uL3 (210 aa).

The interval 126–167 (WGFQRGPSGHGSKNIREPGSTGNATFPGRVIKGKKMPGQKGN) is disordered. The segment covering 156-167 (IKGKKMPGQKGN) has biased composition (basic residues).

It belongs to the universal ribosomal protein uL3 family. Part of the 50S ribosomal subunit. Forms a cluster with proteins L14 and L19.

Its function is as follows. One of the primary rRNA binding proteins, it binds directly near the 3'-end of the 23S rRNA, where it nucleates assembly of the 50S subunit. The chain is Large ribosomal subunit protein uL3 from Syntrophobacter fumaroxidans (strain DSM 10017 / MPOB).